Consider the following 193-residue polypeptide: Peptidyl-tRNA hydrolase (193 aa).

Position 16 (tyrosine 16) interacts with tRNA. The active-site Proton acceptor is the histidine 21. Positions 66, 68, and 114 each coordinate tRNA.

The protein belongs to the PTH family. Monomer.

The protein localises to the cytoplasm. The catalysed reaction is an N-acyl-L-alpha-aminoacyl-tRNA + H2O = an N-acyl-L-amino acid + a tRNA + H(+). Hydrolyzes ribosome-free peptidyl-tRNAs (with 1 or more amino acids incorporated), which drop off the ribosome during protein synthesis, or as a result of ribosome stalling. In terms of biological role, catalyzes the release of premature peptidyl moieties from peptidyl-tRNA molecules trapped in stalled 50S ribosomal subunits, and thus maintains levels of free tRNAs and 50S ribosomes. This chain is Peptidyl-tRNA hydrolase, found in Geobacter sulfurreducens (strain ATCC 51573 / DSM 12127 / PCA).